The chain runs to 142 residues: ATP synthase epsilon chain (142 aa).

The protein belongs to the ATPase epsilon chain family. As to quaternary structure, F-type ATPases have 2 components, CF(1) - the catalytic core - and CF(0) - the membrane proton channel. CF(1) has five subunits: alpha(3), beta(3), gamma(1), delta(1), epsilon(1). CF(0) has three main subunits: a, b and c.

The protein resides in the cell inner membrane. Functionally, produces ATP from ADP in the presence of a proton gradient across the membrane. In Haemophilus influenzae (strain 86-028NP), this protein is ATP synthase epsilon chain.